The sequence spans 118 residues: MTRVKRGNVARKRRNKILKLAKGFRGSHSTLFRTANQQVMKALRSAYRDRKKKKRDFRRLWITRINAASRQHGLSYSQLIGNLKKADIQLNRKMLAQLAVLDPASFGKVAELASQAKG.

This sequence belongs to the bacterial ribosomal protein bL20 family.

Binds directly to 23S ribosomal RNA and is necessary for the in vitro assembly process of the 50S ribosomal subunit. It is not involved in the protein synthesizing functions of that subunit. The chain is Large ribosomal subunit protein bL20 from Nostoc punctiforme (strain ATCC 29133 / PCC 73102).